The chain runs to 720 residues: DNA ligase (720 aa).

Residues aspartate 57–aspartate 61, serine 106–leucine 107, and glutamate 140 contribute to the NAD(+) site. Residue lysine 142 is the N6-AMP-lysine intermediate of the active site. Arginine 163, glutamate 200, lysine 316, and lysine 340 together coordinate NAD(+). 4 residues coordinate Zn(2+): cysteine 434, cysteine 437, cysteine 458, and cysteine 464. The BRCT domain occupies alanine 643–glycine 720.

This sequence belongs to the NAD-dependent DNA ligase family. LigA subfamily. It depends on Mg(2+) as a cofactor. Requires Mn(2+) as cofactor.

It catalyses the reaction NAD(+) + (deoxyribonucleotide)n-3'-hydroxyl + 5'-phospho-(deoxyribonucleotide)m = (deoxyribonucleotide)n+m + AMP + beta-nicotinamide D-nucleotide.. DNA ligase that catalyzes the formation of phosphodiester linkages between 5'-phosphoryl and 3'-hydroxyl groups in double-stranded DNA using NAD as a coenzyme and as the energy source for the reaction. It is essential for DNA replication and repair of damaged DNA. In Xanthobacter autotrophicus (strain ATCC BAA-1158 / Py2), this protein is DNA ligase.